The chain runs to 606 residues: Mitogen-activated protein kinase kinase kinase 7 (606 aa).

Residues 1 to 300 (MSTASAASSS…FPGADEPLQY (300 aa)) form an interaction with MAPK8IP1 region. Residues 36 to 291 (IEVEEVVGRG…KIMTHLMRYF (256 aa)) enclose the Protein kinase domain. Residues 42 to 50 (VGRGAFGVV) and K63 each bind ATP. Residue K72 forms a Glycyl lysine isopeptide (Lys-Gly) (interchain with G-Cter in ubiquitin) linkage. Catalysis depends on D156, which acts as the Proton acceptor. K158 participates in a covalent cross-link: Glycyl lysine isopeptide (Lys-Gly) (interchain with G-Cter in ubiquitin). 2 positions are modified to (Microbial infection) O-acetylthreonine; by Yersinia YopJ; alternate: T184 and T187. A phosphothreonine; by autocatalysis; alternate mark is found at T184 and T187. S192 is modified (phosphoserine; by autocatalysis). K209 participates in a covalent cross-link: Glycyl lysine isopeptide (Lys-Gly) (interchain with G-Cter in ubiquitin). The segment at 301-338 (PCQYSDEGQSNSATSTGSFMDIASTNTSNKSDTNMEQV) is disordered. Residues 306–338 (DEGQSNSATSTGSFMDIASTNTSNKSDTNMEQV) are compositionally biased toward polar residues. Residue T341 is modified to (Microbial infection) O-acetylthreonine; by Yersinia YopJ; alternate. The tract at residues 354–391 (KNQAKQQSESGRLSLGASRGSSVESLPPTSEGKRMSAD) is disordered. Low complexity predominate over residues 361-375 (SESGRLSLGASRGSS). Phosphoserine is present on residues S367, S389, and S439. Polar residues predominate over residues 443–452 (LTVTGTEPGQ). The interval 443-493 (LTVTGTEPGQVSSRSSSPSVRMITTSGPTSEKPTRSHPWTPDDSTDTNGSD) is disordered. (Microbial infection) O-acetylthreonine; by Yersinia YopJ; alternate is present on residues T444, T446, and T448. Positions 453–463 (VSSRSSSPSVR) are enriched in low complexity. S455 carries the post-translational modification Phosphoserine. Over residues 464-473 (MITTSGPTSE) the composition is skewed to polar residues. T467 is subject to (Microbial infection) O-acetylthreonine; by Yersinia YopJ; alternate.

It belongs to the protein kinase superfamily. STE Ser/Thr protein kinase family. MAP kinase kinase kinase subfamily. Can form homodimer. Binds both upstream activators and downstream substrates in multimolecular complexes. Interacts with TAB1/MAP3K7IP1, TAB2/MAP3K7IP2 and TAB3/MAP3K7IP3. Identified in the TRIKA2 complex composed of MAP3K7/TAK1, TAB1/MAP3K7IP1 and TAB2/MAP3K7IP2. Interacts with PPM1L and PPM1B/PP2CB. Interaction with PP2A and PPP6C leads to its repressed activity. Interacts with TRAF6 and TAB1/MAP3K7IP1; during IL-1 signaling. Interacts with TAOK1 and TAOK2; interaction with TAOK2 interferes with MAP3K7 interaction with IKKA, thus preventing NF-kappa-B activation. Interacts with DYNC2I2 (via WD domains). Interacts with CYLD and RBCK1. Interacts with TGFBR1; induces MAP3K7/TAK1 activation by TRAF6. Interacts with MAPK8IP1 and SMAD6. Interacts with isoform 1 of VRK2. Interacts with DAB2; the interaction is induced by TGF-beta stimulation and may mediate TGF-beta stimulated JNK activation. Interacts with TRIM5. Part of a complex containing ITCH, NDFIP1 and MAP3K7. Interacts with IFIT5; the interaction synergizes the recruitment of IKK to MAP3K7 and enhances IKK phosphorylation. Interacts with PLEKHM1 (via N- and C-terminus). Interacts with TRIM8. Found in a complex with SH3RF1, RAC2, MAP2K7/MKK7, MAPK8IP1/JIP1, MAPK8/JNK1 and MAPK9/JNK2. Interacts with SASH1. Interacts with RIPK1. As to quaternary structure, (Microbial infection) Interacts with herpes simplex virus 2 protein US2; this interaction induces MAP3K7 phosphorylation and subsequent activation. The cofactor is Mg(2+). Post-translationally, association with TAB1/MAP3K7IP1 promotes autophosphorylation at Ser-192 and subsequent activation. Association with TAB2/MAP3K7IP2, itself associated with free unanchored Lys-63 polyubiquitin chain, promotes autophosphorylation and subsequent activation of MAP3K7. Dephosphorylation at Ser-192 by PPM1B/PP2CB and at Thr-187 by PP2A and PPP6C leads to inactivation. 'Lys-48'-linked polyubiquitination at Lys-72 is induced by TNFalpha, and leads to proteasomal degradation. Undergoes 'Lys-48'-linked polyubiquitination catalyzed by ITCH. Requires 'Lys-63'-linked polyubiquitination for autophosphorylation and subsequent activation. 'Lys-63'-linked ubiquitination does not lead to proteasomal degradation. Deubiquitinated by CYLD, a protease that selectively cleaves 'Lys-63'-linked ubiquitin chains. Deubiquitinated by Y.enterocolitica YopP. Deubiquitinated by USP19; leading to negative regulation of TNF-alpha- and IL-1beta-triggered NF-kappa-B activation. In terms of processing, (Microbial infection) Cleaved and inactivated by the proteases 3C of coxsackievirus A16 and human enterovirus D68, allowing the virus to disrupt TRAF6-triggered NF-kappa-B induction. Post-translationally, (Microbial infection) Acetylation of Thr-184 and Thr-187 by Yersinia YopJ prevents phosphorylation and activation, thus blocking the MAPK signaling pathway. Isoform 1A is the most abundant in ovary, skeletal muscle, spleen and blood mononuclear cells. Isoform 1B is highly expressed in brain, kidney and small intestine. Isoform 1C is the major form in prostate. Isoform 1D is the less abundant form.

The protein localises to the cytoplasm. Its subcellular location is the cell membrane. It catalyses the reaction L-seryl-[protein] + ATP = O-phospho-L-seryl-[protein] + ADP + H(+). The catalysed reaction is L-threonyl-[protein] + ATP = O-phospho-L-threonyl-[protein] + ADP + H(+). Its activity is regulated as follows. Activated by pro-inflammatory cytokines and in response to physical and chemical stresses, including osmotic stress, oxidative stress, arsenic and ultraviolet light irradiation. Activated by 'Lys-63'-linked polyubiquitination and by autophosphorylation. Association with TAB1/MAP3K7IP1 and TAB2/MAP3K7IP2 promotes activation through autophosphorylation, whereas PPM1B/PP2CB, PP2A and PPP6C dephosphorylation leads to inactivation. Ceramides are also able to activate MAP3K7/TAK1. In terms of biological role, serine/threonine kinase which acts as an essential component of the MAP kinase signal transduction pathway. Plays an important role in the cascades of cellular responses evoked by changes in the environment. Mediates signal transduction of TRAF6, various cytokines including interleukin-1 (IL-1), transforming growth factor-beta (TGFB), TGFB-related factors like BMP2 and BMP4, toll-like receptors (TLR), tumor necrosis factor receptor CD40 and B-cell receptor (BCR). Once activated, acts as an upstream activator of the MKK/JNK signal transduction cascade and the p38 MAPK signal transduction cascade through the phosphorylation and activation of several MAP kinase kinases like MAP2K1/MEK1, MAP2K3/MKK3, MAP2K6/MKK6 and MAP2K7/MKK7. These MAP2Ks in turn activate p38 MAPKs and c-jun N-terminal kinases (JNKs); both p38 MAPK and JNK pathways control the transcription factors activator protein-1 (AP-1). Independently of MAP2Ks and p38 MAPKs, acts as a key activator of NF-kappa-B by promoting activation of the I-kappa-B-kinase (IKK) core complex. Mechanistically, recruited to polyubiquitin chains of RIPK2 and IKBKG/NEMO via TAB2/MAP3K7IP2 and TAB3/MAP3K7IP3, and catalyzes phosphorylation and activation of IKBKB/IKKB component of the IKK complex, leading to NF-kappa-B activation. In osmotic stress signaling, plays a major role in the activation of MAPK8/JNK1, but not that of NF-kappa-B. Promotes TRIM5 capsid-specific restriction activity. Phosphorylates RIPK1 at 'Ser-321' which positively regulates RIPK1 interaction with RIPK3 to promote necroptosis but negatively regulates RIPK1 kinase activity and its interaction with FADD to mediate apoptosis. Phosphorylates STING1 in response to cGAMP-activation, promoting association between STEEP1 and STING1 and STING1 translocation to COPII vesicles. The protein is Mitogen-activated protein kinase kinase kinase 7 of Homo sapiens (Human).